Reading from the N-terminus, the 144-residue chain is Ferredoxin-thioredoxin reductase catalytic chain, chloroplastic (144 aa).

The transit peptide at M1–Q31 directs the protein to the chloroplast. Residue C83 coordinates [4Fe-4S] cluster. The Nucleophile role is filled by C85. C85 and C115 form a disulfide bridge. [4Fe-4S] cluster contacts are provided by C102, C104, and C113.

It belongs to the ferredoxin thioredoxin reductase beta subunit family. As to quaternary structure, heterodimer of subunit A (variable subunit) and subunit B (catalytic subunit). Heterodimeric FTR forms a complex with ferredoxin and thioredoxin. [4Fe-4S] cluster is required as a cofactor.

It localises to the plastid. The protein resides in the chloroplast. It carries out the reaction [thioredoxin]-disulfide + 2 reduced [2Fe-2S]-[ferredoxin] + 2 H(+) = [thioredoxin]-dithiol + 2 oxidized [2Fe-2S]-[ferredoxin]. In terms of biological role, catalytic subunit of the ferredoxin-thioredoxin reductase (FTR), which catalyzes the two-electron reduction of thioredoxins by the electrons provided by reduced ferredoxin. The sequence is that of Ferredoxin-thioredoxin reductase catalytic chain, chloroplastic (FTRC) from Spinacia oleracea (Spinach).